The sequence spans 89 residues: Small ribosomal subunit protein uS17 (89 aa).

The protein belongs to the universal ribosomal protein uS17 family. Part of the 30S ribosomal subunit.

Functionally, one of the primary rRNA binding proteins, it binds specifically to the 5'-end of 16S ribosomal RNA. The sequence is that of Small ribosomal subunit protein uS17 from Paracidovorax citrulli (strain AAC00-1) (Acidovorax citrulli).